We begin with the raw amino-acid sequence, 446 residues long: Phosphoglucosamine mutase (446 aa).

Catalysis depends on S101, which acts as the Phosphoserine intermediate. The Mg(2+) site is built by S101, D240, D242, and D244. S101 carries the phosphoserine modification.

This sequence belongs to the phosphohexose mutase family. It depends on Mg(2+) as a cofactor. Activated by phosphorylation.

It catalyses the reaction alpha-D-glucosamine 1-phosphate = D-glucosamine 6-phosphate. In terms of biological role, catalyzes the conversion of glucosamine-6-phosphate to glucosamine-1-phosphate. The protein is Phosphoglucosamine mutase of Pseudomonas putida (strain ATCC 700007 / DSM 6899 / JCM 31910 / BCRC 17059 / LMG 24140 / F1).